We begin with the raw amino-acid sequence, 630 residues long: Alpha-1,4-glucan:maltose-1-phosphate maltosyltransferase (630 aa).

3 residues coordinate alpha-maltose 1-phosphate: Arg234, Gln294, and Asp329. Catalysis depends on Asp365, which acts as the Nucleophile. Asn366 lines the alpha-maltose 1-phosphate pocket. The Proton donor role is filled by Glu394. 504 to 505 (KY) is a binding site for alpha-maltose 1-phosphate.

The protein belongs to the glycosyl hydrolase 13 family. GlgE subfamily. Homodimer.

The catalysed reaction is alpha-maltose 1-phosphate + [(1-&gt;4)-alpha-D-glucosyl](n) = [(1-&gt;4)-alpha-D-glucosyl](n+2) + phosphate. Maltosyltransferase that uses maltose 1-phosphate (M1P) as the sugar donor to elongate linear or branched alpha-(1-&gt;4)-glucans. Is involved in a branched alpha-glucan biosynthetic pathway from trehalose, together with TreS, Mak and GlgB. The polypeptide is Alpha-1,4-glucan:maltose-1-phosphate maltosyltransferase (Picrophilus torridus (strain ATCC 700027 / DSM 9790 / JCM 10055 / NBRC 100828 / KAW 2/3)).